The following is a 331-amino-acid chain: Tyrosine recombinase XerD (331 aa).

The Core-binding (CB) domain maps to 8 to 93 (GRDGARLESF…SMRQFYRFLY (86 aa)). Residues 114–318 (ALPKTMSVAD…LEERLQELVQ (205 aa)) enclose the Tyr recombinase domain. Residues Arg161 and Lys185 contribute to the active site. Positions 214-228 (QEKSKAAASQKKTDT) are enriched in basic and acidic residues. The interval 214–239 (QEKSKAAASQKKTDTAESPWLFPSNS) is disordered. Catalysis depends on residues His270, Arg273, and His296. The active-site O-(3'-phospho-DNA)-tyrosine intermediate is the Tyr305.

This sequence belongs to the 'phage' integrase family. XerD subfamily. As to quaternary structure, forms a cyclic heterotetrameric complex composed of two molecules of XerC and two molecules of XerD.

It localises to the cytoplasm. Site-specific tyrosine recombinase, which acts by catalyzing the cutting and rejoining of the recombining DNA molecules. The XerC-XerD complex is essential to convert dimers of the bacterial chromosome into monomers to permit their segregation at cell division. It also contributes to the segregational stability of plasmids. This Agrobacterium fabrum (strain C58 / ATCC 33970) (Agrobacterium tumefaciens (strain C58)) protein is Tyrosine recombinase XerD.